A 396-amino-acid chain; its full sequence is Stearoyl-[acyl-carrier-protein] 9-desaturase, chloroplastic (396 aa).

A chloroplast-targeting transit peptide spans 1–33 (MAIRINTATFQSDLYRSFAFPQPKPLRSPKFAM). Residues Glu138, Glu176, His179, Glu229, Glu262, and His265 each contribute to the Fe cation site.

It belongs to the fatty acid desaturase type 2 family. Homodimer. Fe(2+) is required as a cofactor.

It localises to the plastid. The protein localises to the chloroplast. It catalyses the reaction octadecanoyl-[ACP] + 2 reduced [2Fe-2S]-[ferredoxin] + O2 + 2 H(+) = (9Z)-octadecenoyl-[ACP] + 2 oxidized [2Fe-2S]-[ferredoxin] + 2 H2O. Its pathway is lipid metabolism; fatty acid metabolism. In terms of biological role, converts stearoyl-ACP to oleoyl-ACP by introduction of a cis double bond between carbons 9 and 10 of the acyl chain. This chain is Stearoyl-[acyl-carrier-protein] 9-desaturase, chloroplastic, found in Helianthus annuus (Common sunflower).